The chain runs to 232 residues: Fibrillarin-like rRNA/tRNA 2'-O-methyltransferase (232 aa).

S-adenosyl-L-methionine-binding positions include 89-90 (TT), 108-109 (EF), 133-134 (DA), and 153-156 (DIAQ).

This sequence belongs to the methyltransferase superfamily. Fibrillarin family. Interacts with nop5. Component of box C/D small ribonucleoprotein (sRNP) particles that contain rpl7ae, FlpA and nop5, plus a guide RNA.

Its function is as follows. Involved in pre-rRNA and tRNA processing. Utilizes the methyl donor S-adenosyl-L-methionine to catalyze the site-specific 2'-hydroxyl methylation of ribose moieties in rRNA and tRNA. Site specificity is provided by a guide RNA that base pairs with the substrate. Methylation occurs at a characteristic distance from the sequence involved in base pairing with the guide RNA. This chain is Fibrillarin-like rRNA/tRNA 2'-O-methyltransferase, found in Saccharolobus islandicus (strain M.16.27) (Sulfolobus islandicus).